The sequence spans 423 residues: UPF0229 protein PST_0721 (423 aa).

The tract at residues 84–109 (AGERIPRPQGGGGGQGAGQASNSGEG) is disordered.

It belongs to the UPF0229 family.

The protein is UPF0229 protein PST_0721 of Stutzerimonas stutzeri (strain A1501) (Pseudomonas stutzeri).